A 188-amino-acid chain; its full sequence is Ribosome maturation factor RimM (188 aa).

Residues 112 to 187 (SDSYYWVDLI…LLTLDWQSDW (76 aa)) form the PRC barrel domain.

The protein belongs to the RimM family. In terms of assembly, binds ribosomal protein uS19.

The protein resides in the cytoplasm. In terms of biological role, an accessory protein needed during the final step in the assembly of 30S ribosomal subunit, possibly for assembly of the head region. Essential for efficient processing of 16S rRNA. May be needed both before and after RbfA during the maturation of 16S rRNA. It has affinity for free ribosomal 30S subunits but not for 70S ribosomes. The protein is Ribosome maturation factor RimM of Polynucleobacter asymbioticus (strain DSM 18221 / CIP 109841 / QLW-P1DMWA-1) (Polynucleobacter necessarius subsp. asymbioticus).